The chain runs to 385 residues: Transcription termination factor 2, mitochondrial (385 aa).

The N-terminal 35 residues, 1–35 (MPWRLPTGHQLCRLCLLRKPRPALKIKPSSACVTY), are a transit peptide targeting the mitochondrion.

This sequence belongs to the mTERF family. Monomer.

It localises to the mitochondrion matrix. Its subcellular location is the mitochondrion nucleoid. In terms of biological role, binds mitochondrial DNA and plays a role in the regulation of transcription of mitochondrial mRNA and rRNA species. The chain is Transcription termination factor 2, mitochondrial (Mterf2) from Mus musculus (Mouse).